The sequence spans 305 residues: Acyl transferase (305 aa).

Residues S116, D213, and H243 each act as charge relay system in the active site.

The protein belongs to the LuxD family.

The protein operates within lipid metabolism; fatty acid reduction for biolumincescence. Acyl transferase is part of the fatty acid reductase system required for aldehyde biosynthesis; it produces fatty acids for the luminescent reaction. The chain is Acyl transferase from Photobacterium leiognathi.